Here is a 238-residue protein sequence, read N- to C-terminus: Lipid transferase CIDEC (238 aa).

The required for liquid-liquid phase separation (LLPS) stretch occupies residues 1-35 (MDYAMKSLSLLYPRSLSRHVAVSTAVVTQQLVSEP). One can recognise a CIDE-N domain in the interval 41-118 (RARPCRVSTA…VLQKGQKWKS (78 aa)).

This sequence belongs to the CIDE family. Homodimer. Interacts with CIDEA. Homooligomer; undergoes liquid-liquid phase separation (LLPS) via its N-terminus, facilitating lipid droplet fusion, occurs at the lipid droplet contact sites. Interacts with PLIN1. Interacts with NFAT5; this interaction is direct and retains NFAT5 in the cytoplasm. Interacts with CEBPB. Interacts with isoform CLSTN3beta of CLSTN3; inhibiting the lipid transferase activity of CIDEC. Ubiquitinated and targeted to proteasomal degradation, resulting in a short half-life (about 15 minutes in 3T3-L1 cells). Protein stability depends on triaclyglycerol synthesis, fatty acid availability and lipid droplet formation.

Its subcellular location is the lipid droplet. It is found in the endoplasmic reticulum. It localises to the nucleus. The catalysed reaction is a triacyl-sn-glycerol(in) = a triacyl-sn-glycerol(out). Its function is as follows. Lipid transferase specifically expressed in white adipose tissue, which promotes unilocular lipid droplet formation by mediating lipid droplet fusion. Lipid droplet fusion promotes their enlargement, restricting lipolysis and favoring lipid storage. Localizes on the lipid droplet surface, at focal contact sites between lipid droplets, and mediates atypical lipid droplet fusion by undergoing liquid-liquid phase separation (LLPS) and promoting directional net neutral lipid transfer from the smaller to larger lipid droplets. The transfer direction may be driven by the internal pressure difference between the contacting lipid droplet pair. Its role in neutral lipid transfer and lipid droplet enlargement is activated by the interaction with PLIN1. May also act as a CEBPB coactivator in the white adipose tissue to control the expression of a subset of CEBPB downstream target genes, including SOCS1, SOCS3, TGFB1, TGFBR1, ID2 and XDH. When overexpressed in preadipocytes, induces apoptosis or increases cell susceptibility to apoptosis induced by serum deprivation or TGFB treatment. This Rattus norvegicus (Rat) protein is Lipid transferase CIDEC.